Reading from the N-terminus, the 276-residue chain is Halorhodopsin (276 aa).

Residues 1–21 (MTAASTTATTMLQATQSDVLQ) constitute a propeptide that is removed on maturation. Residues 22–25 (EIQS) lie on the Extracellular side of the membrane. A helical membrane pass occupies residues 26–51 (NFLLNSSIWVNIALAGVVILLFVAMG). Over 52-57 (RDIESP) the chain is Cytoplasmic. Residues 58-81 (RAKLIWVATMLVPLVSISSYAGLA) traverse the membrane as a helical segment. Residues 82 to 105 (SGLTVGFLQMPPGHALAGQEVLSP) are Extracellular-facing. A helical transmembrane segment spans residues 106–127 (WGRYLTWTFSTPMILLALGLLA). Residues 128–130 (DTD) lie on the Cytoplasmic side of the membrane. A helical transmembrane segment spans residues 131-154 (IASLFTAITMDIGMCVTGLAAALI). The Extracellular segment spans residues 155 to 157 (TSS). A helical transmembrane segment spans residues 158 to 180 (HLLRWVFYGISCAFFVAVLYVLL). Residues 181-192 (VQWPADAEAAGT) are Cytoplasmic-facing. The chain crosses the membrane as a helical span at residues 193–216 (SEIFGTLKILTVVLWLGYPILWAL). The Extracellular segment spans residues 217–225 (GSEGVALLS). A helical transmembrane segment spans residues 226 to 254 (VGVTSWGYSGLDILAKYVFAFLLLRWVAA). At Lys241 the chain carries N6-(retinylidene)lysine. At 255–276 (NEGAVSGSGMSIGSGGAAPADD) the chain is on the cytoplasmic side.

It belongs to the archaeal/bacterial/fungal opsin family.

The protein localises to the cell membrane. Functionally, light-driven chloride pump. The chain is Halorhodopsin (hop) from Halobacterium halobium (strain port).